A 292-amino-acid polypeptide reads, in one-letter code: GTP cyclohydrolase FolE2 (292 aa).

It belongs to the GTP cyclohydrolase IV family.

The catalysed reaction is GTP + H2O = 7,8-dihydroneopterin 3'-triphosphate + formate + H(+). The protein operates within cofactor biosynthesis; 7,8-dihydroneopterin triphosphate biosynthesis; 7,8-dihydroneopterin triphosphate from GTP: step 1/1. Converts GTP to 7,8-dihydroneopterin triphosphate. The chain is GTP cyclohydrolase FolE2 from Staphylococcus epidermidis (strain ATCC 35984 / DSM 28319 / BCRC 17069 / CCUG 31568 / BM 3577 / RP62A).